The following is a 141-amino-acid chain: 15 kDa lipoprotein (141 aa).

The signal sequence occupies residues 1–17 (MVKRGRFALCLAVLLGA). Cys-18 is lipidated: N-palmitoyl cysteine. Cys-18 carries the S-diacylglycerol cysteine lipid modification.

The protein resides in the cell membrane. The sequence is that of 15 kDa lipoprotein (tpp15) from Treponema pallidum (strain Nichols).